We begin with the raw amino-acid sequence, 400 residues long: DNA primase large subunit PriL (400 aa).

[4Fe-4S] cluster contacts are provided by cysteine 247, cysteine 356, cysteine 367, and cysteine 373.

The protein belongs to the eukaryotic-type primase large subunit family. As to quaternary structure, heterodimer of a small subunit (PriS) and a large subunit (PriL). [4Fe-4S] cluster is required as a cofactor.

Functionally, regulatory subunit of DNA primase, an RNA polymerase that catalyzes the synthesis of short RNA molecules used as primers for DNA polymerase during DNA replication. Stabilizes and modulates the activity of the small subunit, increasing the rate of DNA synthesis, and conferring RNA synthesis capability. The DNA polymerase activity may enable DNA primase to also catalyze primer extension after primer synthesis. May also play a role in DNA repair. This Thermococcus kodakarensis (strain ATCC BAA-918 / JCM 12380 / KOD1) (Pyrococcus kodakaraensis (strain KOD1)) protein is DNA primase large subunit PriL.